The primary structure comprises 187 residues: Elongation factor P (187 aa).

The protein belongs to the elongation factor P family.

Its subcellular location is the cytoplasm. It participates in protein biosynthesis; polypeptide chain elongation. Its function is as follows. Involved in peptide bond synthesis. Stimulates efficient translation and peptide-bond synthesis on native or reconstituted 70S ribosomes in vitro. Probably functions indirectly by altering the affinity of the ribosome for aminoacyl-tRNA, thus increasing their reactivity as acceptors for peptidyl transferase. This Helicobacter pylori (strain P12) protein is Elongation factor P.